A 450-amino-acid polypeptide reads, in one-letter code: UDP-N-acetylmuramoylalanine--D-glutamate ligase (450 aa).

119-125 contributes to the ATP binding site; that stretch reads GSNGKTT.

The protein belongs to the MurCDEF family.

The protein localises to the cytoplasm. It catalyses the reaction UDP-N-acetyl-alpha-D-muramoyl-L-alanine + D-glutamate + ATP = UDP-N-acetyl-alpha-D-muramoyl-L-alanyl-D-glutamate + ADP + phosphate + H(+). The protein operates within cell wall biogenesis; peptidoglycan biosynthesis. Functionally, cell wall formation. Catalyzes the addition of glutamate to the nucleotide precursor UDP-N-acetylmuramoyl-L-alanine (UMA). In Streptococcus gordonii (strain Challis / ATCC 35105 / BCRC 15272 / CH1 / DL1 / V288), this protein is UDP-N-acetylmuramoylalanine--D-glutamate ligase.